A 290-amino-acid polypeptide reads, in one-letter code: Nucleoid occlusion protein (290 aa).

A DNA-binding region (H-T-H motif) is located at residues 153-172 (EALAQRLGKGQSTIANKLRL).

This sequence belongs to the ParB family.

It is found in the cytoplasm. It localises to the nucleoid. Effects nucleoid occlusion by binding relatively nonspecifically to DNA and preventing the assembly of the division machinery in the vicinity of the nucleoid, especially under conditions that disturb the cell cycle. It helps to coordinate cell division and chromosome segregation by preventing the formation of the Z ring through the nucleoid, which would cause chromosome breakage. This chain is Nucleoid occlusion protein, found in Bacillus cereus (strain ATCC 10987 / NRS 248).